Reading from the N-terminus, the 199-residue chain is MAKVLVLSGGLSEKEKSYSSQMLDLFVKTYKEVHPNDELEFVDLNTTKHAEVFLSRNTFATYWKDVESDKWIDKLKAADKVILSCSMTNFGPTAVVKNFIDSVAVANKTFSYKYSKKGDAVGLLDHLRVMIVTTQGAPKDWYLWGSHTNWLIGTWKFLGAKYVDTFELNGTKLSVFADKKPYDVVEEFRQDALEKAKQF.

17–19 (SYS) is an FMN binding site.

The protein belongs to the azoreductase type 1 family. In terms of assembly, homodimer. The cofactor is FMN.

The enzyme catalyses 2 a quinone + NADH + H(+) = 2 a 1,4-benzosemiquinone + NAD(+). It catalyses the reaction N,N-dimethyl-1,4-phenylenediamine + anthranilate + 2 NAD(+) = 2-(4-dimethylaminophenyl)diazenylbenzoate + 2 NADH + 2 H(+). Functionally, quinone reductase that provides resistance to thiol-specific stress caused by electrophilic quinones. Its function is as follows. Also exhibits azoreductase activity. Catalyzes the reductive cleavage of the azo bond in aromatic azo compounds to the corresponding amines. This chain is FMN-dependent NADH:quinone oxidoreductase, found in Mycoplasmopsis synoviae (strain 53) (Mycoplasma synoviae).